Here is a 67-residue protein sequence, read N- to C-terminus: Gallinacin-6 (67 aa).

Positions 1 to 19 (MRILYLLLSVLFVVLQGVA) are cleaved as a signal peptide. Residues 20–25 (GQPYFS) constitute a propeptide that is removed on maturation. Intrachain disulfides connect Cys31–Cys60, Cys38–Cys53, and Cys43–Cys61.

Belongs to the beta-defensin family. Expressed in bone marrow, testis, ovary, lung and trachea. Expressed in the ovarian stroma, but not in the ovarian follicles.

Its subcellular location is the secreted. It localises to the cytoplasmic granule. Has bactericidal activity. Potent activity against S.typhimurium and S.entiriditis. In Gallus gallus (Chicken), this protein is Gallinacin-6 (GAL6).